Consider the following 297-residue polypeptide: Bifunctional protein FolD 2 (297 aa).

Residues Gly164 to Ser166, Ser193, and Ile234 contribute to the NADP(+) site.

The protein belongs to the tetrahydrofolate dehydrogenase/cyclohydrolase family. In terms of assembly, homodimer.

The enzyme catalyses (6R)-5,10-methylene-5,6,7,8-tetrahydrofolate + NADP(+) = (6R)-5,10-methenyltetrahydrofolate + NADPH. It catalyses the reaction (6R)-5,10-methenyltetrahydrofolate + H2O = (6R)-10-formyltetrahydrofolate + H(+). It functions in the pathway one-carbon metabolism; tetrahydrofolate interconversion. In terms of biological role, catalyzes the oxidation of 5,10-methylenetetrahydrofolate to 5,10-methenyltetrahydrofolate and then the hydrolysis of 5,10-methenyltetrahydrofolate to 10-formyltetrahydrofolate. This chain is Bifunctional protein FolD 2, found in Haloarcula marismortui (strain ATCC 43049 / DSM 3752 / JCM 8966 / VKM B-1809) (Halobacterium marismortui).